Consider the following 459-residue polypeptide: Anthocyanidin 3-O-glucoside 2''-O-glucosyltransferase (459 aa).

H20 functions as the Proton acceptor in the catalytic mechanism. H20 lines the an anthocyanidin pocket. Residue D117 is the Charge relay of the active site. UDP-alpha-D-glucose contacts are provided by T138, V335, Q337, H352, W355, S357, and E360. Position 375 (G375) interacts with an anthocyanidin. Residues D376 and Q377 each coordinate UDP-alpha-D-glucose.

It belongs to the UDP-glycosyltransferase family. Mainly expressed in the petals and tubes of flower buds at around 24 hours before flower opening.

It carries out the reaction an anthocyanidin 3-O-beta-D-glucoside + UDP-alpha-D-glucose = an anthocyanidin 3-O-sophoroside + UDP + 2 H(+). The protein operates within pigment biosynthesis; anthocyanin biosynthesis. Glycosyltransferase that mediates the glucosylation of anthocyanidin 3-O-glucosides to yield anthocyanidin 3-O-sophorosides. 3-O-sophoroside derivatives are required for the bright blue or red color of flowers. The chain is Anthocyanidin 3-O-glucoside 2''-O-glucosyltransferase (3GGT) from Ipomoea nil (Japanese morning glory).